The following is a 204-amino-acid chain: Proteasome subunit beta type-3 (204 aa).

It belongs to the peptidase T1B family. As to quaternary structure, the 26S proteasome consists of a 20S proteasome core and two 19S regulatory subunits. The 20S proteasome core is composed of 28 subunits that are arranged in four stacked rings, resulting in a barrel-shaped structure. The two end rings are each formed by seven alpha subunits, and the two central rings are each formed by seven beta subunits. The catalytic chamber with the active sites is on the inside of the barrel.

It is found in the cytoplasm. The protein localises to the nucleus. Its function is as follows. Non-catalytic component of the proteasome, a multicatalytic proteinase complex which is characterized by its ability to cleave peptides with Arg, Phe, Tyr, Leu, and Glu adjacent to the leaving group at neutral or slightly basic pH. The proteasome has an ATP-dependent proteolytic activity. This is Proteasome subunit beta type-3 (pbs-3) from Caenorhabditis elegans.